The primary structure comprises 746 residues: MLGAPSPRRLADVLAVTAGLVASVRAASPISVSGKSFALNGDNVSYRFHVDDDSKDLIGDHFGGPATEDGVFPPIIGPIQGWVDLIGRQRREFPDLGRGDFRTPAVHIRQAAGYTVSDFQYKSHRVVEGKPALRGLPSTFGDAGDVSTLVVHMYDNYSSVAADLTYSIFPKYDAIVRSVNITNMGKGNITIEKLASLSVDLPYEDFDMLELKGDWAREGKRLRRKVDYGSQGFGSTTGYSSHLHNPFFSLITPTTTESQGEAWGFSLVYTGSFSVEVEKGSQGLTRAAIGVNPYQLSWPLGPGETFSSPEAVAVFSTTGVGGMSRKFHNLYRKHLIKSKFATQMHPVLLNSWEGLGFDYNDTTILHLAQESADLGIKLFVLDDGWFGVKHPRVSDNAGLGDWEANPKRFPQGLPDFISDVTKLKVANSSDHLQFGLWFEPEMVNPNSTLYMEHPDWAIHAGSYPRTLTRNQLVLNVALPEVQDFIIESLSNILSNASISYVKWDNNRGIHEAPYPGLDYAYMLGLYRVFDTLSSKFPNVRWEGCASGGGRFDPGVLQYFPHIWTSDDTDAVERIAIQFGTSLVYPPSAMGAHVSAVPNGQTQRTTSIAFRAHVAMMGGSFGFELTPAEMPEDDKAQIPGIIALAEKVNPIVVKGDMWRLSLPEESNWPAALFISQDGSQAVLFYFQIRANINNAWPVLRLQGLDASAKYKIDGNQTFSGATLMNIGLQYQFNGDYDSKVVFLEKQT.

The first 26 residues, 1–26 (MLGAPSPRRLADVLAVTAGLVASVRA), serve as a signal peptide directing secretion. Residues Asn43, Asn156, Asn180, Asn188, Asn360, Asn427, Asn446, and Asn495 are each glycosylated (N-linked (GlcNAc...) asparagine). Catalysis depends on Asp504, which acts as the Nucleophile. The active-site Proton donor is Asp566. N-linked (GlcNAc...) asparagine glycosylation is present at Asn714.

It belongs to the glycosyl hydrolase 27 family.

Its subcellular location is the secreted. It carries out the reaction Hydrolysis of terminal, non-reducing alpha-D-galactose residues in alpha-D-galactosides, including galactose oligosaccharides, galactomannans and galactolipids.. In terms of biological role, alpha-galactosidase involved in the degradation of simple oligosaccharides like melibiose, raffinose and stachyose, and of polymeric galacto(gluco)mannans. The polypeptide is Alpha-galactosidase 2 (agl2) (Hypocrea jecorina (Trichoderma reesei)).